We begin with the raw amino-acid sequence, 234 residues long: Adenosine 5'-phosphosulfate reductase (234 aa).

The [4Fe-4S] cluster site is built by Cys-120, Cys-121, Cys-203, and Cys-206. Cys-229 (nucleophile; cysteine thiosulfonate intermediate) is an active-site residue.

The protein belongs to the PAPS reductase family. CysH subfamily. Requires [4Fe-4S] cluster as cofactor.

It is found in the cytoplasm. It carries out the reaction [thioredoxin]-disulfide + sulfite + AMP + 2 H(+) = adenosine 5'-phosphosulfate + [thioredoxin]-dithiol. It participates in sulfur metabolism; hydrogen sulfide biosynthesis; sulfite from sulfate. Functionally, catalyzes the formation of sulfite from adenosine 5'-phosphosulfate (APS) using thioredoxin as an electron donor. This is Adenosine 5'-phosphosulfate reductase from Bacillus thuringiensis subsp. konkukian (strain 97-27).